A 167-amino-acid polypeptide reads, in one-letter code: Large ribosomal subunit protein uL10 (167 aa).

This sequence belongs to the universal ribosomal protein uL10 family. As to quaternary structure, part of the ribosomal stalk of the 50S ribosomal subunit. The N-terminus interacts with L11 and the large rRNA to form the base of the stalk. The C-terminus forms an elongated spine to which L12 dimers bind in a sequential fashion forming a multimeric L10(L12)X complex.

Functionally, forms part of the ribosomal stalk, playing a central role in the interaction of the ribosome with GTP-bound translation factors. The chain is Large ribosomal subunit protein uL10 from Psychromonas ingrahamii (strain DSM 17664 / CCUG 51855 / 37).